The chain runs to 212 residues: Imidazole glycerol phosphate synthase subunit HisH (212 aa).

Residues 3–211 (LIAVIDYDMG…VQQVQKLALV (209 aa)) enclose the Glutamine amidotransferase type-1 domain. Catalysis depends on cysteine 81, which acts as the Nucleophile. Catalysis depends on residues histidine 186 and glutamate 188.

Heterodimer of HisH and HisF.

It localises to the cytoplasm. The catalysed reaction is 5-[(5-phospho-1-deoxy-D-ribulos-1-ylimino)methylamino]-1-(5-phospho-beta-D-ribosyl)imidazole-4-carboxamide + L-glutamine = D-erythro-1-(imidazol-4-yl)glycerol 3-phosphate + 5-amino-1-(5-phospho-beta-D-ribosyl)imidazole-4-carboxamide + L-glutamate + H(+). It carries out the reaction L-glutamine + H2O = L-glutamate + NH4(+). Its pathway is amino-acid biosynthesis; L-histidine biosynthesis; L-histidine from 5-phospho-alpha-D-ribose 1-diphosphate: step 5/9. In terms of biological role, IGPS catalyzes the conversion of PRFAR and glutamine to IGP, AICAR and glutamate. The HisH subunit catalyzes the hydrolysis of glutamine to glutamate and ammonia as part of the synthesis of IGP and AICAR. The resulting ammonia molecule is channeled to the active site of HisF. The chain is Imidazole glycerol phosphate synthase subunit HisH from Microcystis aeruginosa (strain NIES-843 / IAM M-2473).